Consider the following 236-residue polypeptide: Thrombin-like enzyme kangshuanmei (236 aa).

One can recognise a Peptidase S1 domain in the interval 1–227; it reads VIGGDECNIN…HLDWIQSIIA (227 aa). Intrachain disulfides connect Cys7-Cys141, Cys28-Cys44, Cys78-Cys234, Cys120-Cys188, Cys152-Cys167, and Cys178-Cys203. The active-site Charge relay system is His43. Asn81 is a glycosylation site (N-linked (GlcNAc...) asparagine). Asp88 serves as the catalytic Charge relay system. N-linked (GlcNAc...) asparagine glycosylation is found at Asn99 and Asn148. Ser182 serves as the catalytic Charge relay system. Asn229 is a glycosylation site (N-linked (GlcNAc...) asparagine).

This sequence belongs to the peptidase S1 family. Snake venom subfamily. Monomer. Post-translationally, N-glycosylated by units composed of Fuc, Man, GlcNAc, Gal and NeuAC residues. As to expression, expressed by the venom gland.

The protein resides in the secreted. With respect to regulation, inhibited by 4-(2-aminoethyl)-benzensulfonyl fluoride. Not inhibited by antithrombin-III. Its function is as follows. Thrombin-like snake venom serine protease. Cleaves bonds after Arg and Lys, converts fibrinogen (FGA and FGB) to fibrin and releases both fibrinopeptides A and B, and fibrinogen peptide Bbeta1-42. Has a blood clotting activity. This chain is Thrombin-like enzyme kangshuanmei, found in Gloydius brevicauda (Korean slamosa snake).